The sequence spans 84 residues: Cytochrome b559 subunit alpha (84 aa).

Residues 22–36 (IIHIPAITILFASGF) traverse the membrane as a helical segment. Heme is bound at residue H24.

The protein belongs to the PsbE/PsbF family. In terms of assembly, heterodimer of an alpha subunit and a beta subunit. PSII is composed of 1 copy each of membrane proteins PsbA, PsbB, PsbC, PsbD, PsbE, PsbF, PsbH, PsbI, PsbJ, PsbK, PsbL, PsbM, PsbT, PsbX, Psb30/Ycf12, peripheral proteins PsbO, CyanoQ (PsbQ), PsbU, PsbV and a large number of cofactors. It forms dimeric complexes. The cofactor is heme b.

The protein localises to the cell inner membrane. In terms of biological role, this b-type cytochrome is tightly associated with the reaction center of photosystem II (PSII). PSII is a light-driven water:plastoquinone oxidoreductase that uses light energy to abstract electrons from H(2)O, generating O(2) and a proton gradient subsequently used for ATP formation. It consists of a core antenna complex that captures photons, and an electron transfer chain that converts photonic excitation into a charge separation. The protein is Cytochrome b559 subunit alpha of Gloeobacter violaceus (strain ATCC 29082 / PCC 7421).